A 348-amino-acid polypeptide reads, in one-letter code: Signal recognition particle receptor FtsY (348 aa).

GTP-binding positions include Gly143–Thr150, Asp225–Arg229, and Thr289–Asp292.

It belongs to the GTP-binding SRP family. FtsY subfamily. In terms of assembly, part of the signal recognition particle protein translocation system, which is composed of SRP and FtsY.

It is found in the cell membrane. The protein resides in the cytoplasm. It catalyses the reaction GTP + H2O = GDP + phosphate + H(+). Functionally, involved in targeting and insertion of nascent membrane proteins into the cytoplasmic membrane. Acts as a receptor for the complex formed by the signal recognition particle (SRP) and the ribosome-nascent chain (RNC). This chain is Signal recognition particle receptor FtsY, found in Mycoplasma pneumoniae (strain ATCC 29342 / M129 / Subtype 1) (Mycoplasmoides pneumoniae).